Here is a 73-residue protein sequence, read N- to C-terminus: Cx9C motif-containing protein 4, mitochondrial (73 aa).

Residues 2 to 44 (SNPCQKEACAIQDCLLSHQYDDAKCAKVIDQLYICCSKFYNDN) enclose the CHCH domain. Short sequence motifs (cx9C motif) lie at residues 5–15 (CQKEACAIQDC) and 26–36 (CAKVIDQLYIC). 2 cysteine pairs are disulfide-bonded: cysteine 5/cysteine 36 and cysteine 15/cysteine 26.

It belongs to the CMC4 family.

It is found in the mitochondrion intermembrane space. This Saccharomyces cerevisiae (strain ATCC 204508 / S288c) (Baker's yeast) protein is Cx9C motif-containing protein 4, mitochondrial (CMC4).